Here is a 697-residue protein sequence, read N- to C-terminus: Potassium-transporting ATPase ATP-binding subunit (697 aa).

The next 4 helical transmembrane spans lie at 55-75 (PIMFVVEIGFVITFILSFFPS), 79-99 (SIPGWFNITVSLILLFTVLFA), 245-265 (LTLIFLIVVVTLPIFTNYLGF), and 271-291 (VLVALLVCLIPTTIGGLLSAI). Asp324 serves as the catalytic 4-aspartylphosphate intermediate. Residues Asp361, Glu365, 393–400 (FKAETRMS), and Lys412 contribute to the ATP site. Mg(2+) is bound by residues Asp535 and Asp539. The next 3 helical transmembrane spans lie at 605–625 (FAIIPAMFTLAIPQMEALNIM), 633–653 (AILSALLFNAVIIPLLIPLAM), and 677–697 (GGVIVPFIGIKVIDIIVGLFI).

It belongs to the cation transport ATPase (P-type) (TC 3.A.3) family. Type IA subfamily. The system is composed of three essential subunits: KdpA, KdpB and KdpC.

The protein resides in the cell membrane. It carries out the reaction K(+)(out) + ATP + H2O = K(+)(in) + ADP + phosphate + H(+). Functionally, part of the high-affinity ATP-driven potassium transport (or Kdp) system, which catalyzes the hydrolysis of ATP coupled with the electrogenic transport of potassium into the cytoplasm. This subunit is responsible for energy coupling to the transport system and for the release of the potassium ions to the cytoplasm. The chain is Potassium-transporting ATPase ATP-binding subunit from Bacillus cereus (strain AH820).